The following is a 392-amino-acid chain: 5-azacytidine-induced protein 2 (392 aa).

Residues 1–197 form a homodimerization region; sequence MDALVEDDIC…IELQKAKQTD (197 aa). Coiled coils occupy residues 40 to 76 and 102 to 196; these read ALVT…LIAR and DRDN…AKQT. The segment at 216–257 is interaction with TBK1 and IKBKE; it reads SDNMQHAYWELKREMSNLHLVTQVQAELLRKLKTSTAIKKAC. 2 positions are modified to phosphoserine: serine 318 and serine 353.

Homodimer. Interacts with IKBKE. Interacts with TBK1. Interacts with TICAM1. Interacts with TAX1BP1. Interacts with CALCOCO2. In terms of assembly, (Microbial infection) Interacts with vaccinia virus protein C6. In terms of processing, ubiquitinated via 'Lys-48'-linked polyubiquitination by TRIM38, leading to its degradation. As to expression, widely expressed. Abundant expression seen in the pancreas and testis.

It is found in the cytoplasm. In terms of biological role, adapter protein which binds TBK1 and IKBKE playing a role in antiviral innate immunity. Activates serine/threonine-protein kinase TBK1 and facilitates its oligomerization. Enhances the phosphorylation of NF-kappa-B p65 subunit RELA by TBK1. Promotes TBK1-induced as well as TNF-alpha or PMA-induced activation of NF-kappa-B. Participates in IFNB promoter activation via TICAM1. This is 5-azacytidine-induced protein 2 (AZI2) from Homo sapiens (Human).